A 492-amino-acid chain; its full sequence is Glycogen synthase 1 (492 aa).

Lysine 15 is a binding site for ADP-alpha-D-glucose.

Belongs to the glycosyltransferase 1 family. Bacterial/plant glycogen synthase subfamily.

The catalysed reaction is [(1-&gt;4)-alpha-D-glucosyl](n) + ADP-alpha-D-glucose = [(1-&gt;4)-alpha-D-glucosyl](n+1) + ADP + H(+). The protein operates within glycan biosynthesis; glycogen biosynthesis. In terms of biological role, synthesizes alpha-1,4-glucan chains using ADP-glucose. This is Glycogen synthase 1 from Trichormus variabilis (strain ATCC 29413 / PCC 7937) (Anabaena variabilis).